The sequence spans 127 residues: EF-hand calcium-binding domain-containing protein 10 (127 aa).

The EF-hand domain occupies 63-98; sequence MDNSNIVAMFEMMDSSGRGTISFVQYKEALKTLGLC.

This is EF-hand calcium-binding domain-containing protein 10 (EFCAB10) from Homo sapiens (Human).